The following is a 471-amino-acid chain: Trimethyllysine dioxygenase (471 aa).

Fe cation contacts are provided by histidine 251 and aspartate 253. Positions 272-302 (KAAPSRPPPPPPPPPPPSEEKEAAGSAAGEA) are disordered. Over residues 276–288 (SRPPPPPPPPPPP) the composition is skewed to pro residues. Residue histidine 430 participates in Fe cation binding.

It belongs to the gamma-BBH/TMLD family. The cofactor is Fe(2+). Requires L-ascorbate as cofactor.

It localises to the cytoplasm. It carries out the reaction N(6),N(6),N(6)-trimethyl-L-lysine + 2-oxoglutarate + O2 = (3S)-3-hydroxy-N(6),N(6),N(6)-trimethyl-L-lysine + succinate + CO2. Its pathway is amine and polyamine biosynthesis; carnitine biosynthesis. Converts trimethyllysine (TML) into hydroxytrimethyllysine (HTML). The sequence is that of Trimethyllysine dioxygenase (cbs-1) from Neurospora crassa (strain ATCC 24698 / 74-OR23-1A / CBS 708.71 / DSM 1257 / FGSC 987).